The sequence spans 980 residues: Thrombospondin-4 (980 aa).

The N-terminal stretch at Met-1–Ala-42 is a signal peptide. The Laminin G-like domain maps to Gln-43–Gly-210. The region spanning Pro-304–Ser-343 is the EGF-like 1 domain. 21 cysteine pairs are disulfide-bonded: Cys-308–Cys-319, Cys-313–Cys-328, Cys-331–Cys-342, Cys-348–Cys-359, Cys-353–Cys-368, Cys-371–Cys-395, Cys-401–Cys-412, Cys-406–Cys-421, Cys-424–Cys-436, Cys-442–Cys-456, Cys-450–Cys-466, Cys-468–Cys-480, Cys-496–Cys-501, Cys-506–Cys-526, Cys-542–Cys-562, Cys-565–Cys-585, Cys-601–Cys-621, Cys-624–Cys-644, Cys-662–Cys-682, Cys-702–Cys-722, and Cys-738–Cys-959. The region spanning Asp-344 to Gln-381 is the EGF-like 2; calcium-binding domain. One can recognise an EGF-like 3; calcium-binding domain in the interval Asp-397–Arg-434. The 44-residue stretch at Thr-438–Gly-481 folds into the EGF-like 4 domain. TSP type-3 repeat units lie at residues Lys-482–Gln-514, Glu-515–Gln-550, Arg-551–Gln-573, Lys-574–Gln-609, Gln-610–Gln-632, Ser-633–Gln-670, Leu-671–Gln-710, and Glu-711–Leu-746. Residues Asn-596 to Met-691 are disordered. Positions Pro-605–Asp-615 are enriched in basic and acidic residues. Asn-631 is a glycosylation site (N-linked (GlcNAc...) asparagine). Positions Thr-659–Leu-671 are enriched in polar residues. Over residues Gly-679–Gly-690 the composition is skewed to acidic residues. A TSP C-terminal domain is found at Arg-750–Pro-964. N-linked (GlcNAc...) asparagine glycosylation occurs at Asn-960.

The protein belongs to the thrombospondin family. Homopentamer; disulfide-linked. Interacts with PTBP3. Interacts (via EGF-like 3; calcium-binding domain) with ATF6 and facilitates its processing, activation and nuclear translocation. Interacts with NOTCH1. As to expression, mainly expressed in astrocytes, and in ressponse to peripheral nerve injury, significantly up-regulated in the dorsal spinal cord (at protein level).

It is found in the endoplasmic reticulum. The protein localises to the sarcoplasmic reticulum. Its subcellular location is the secreted. The protein resides in the extracellular space. It localises to the extracellular matrix. In terms of biological role, adhesive glycoprotein that mediates cell-to-cell and cell-to-matrix interactions and is involved in various processes including cellular proliferation, migration, adhesion and attachment, inflammatory response to CNS injury, regulation of vascular inflammation and adaptive responses of the heart to pressure overload and in myocardial function and remodeling. Binds to structural extracellular matrix (ECM) proteins and modulates the ECM in response to tissue damage, contributing to cardioprotective and adaptive ECM remodeling. Plays a role in ER stress response, via its interaction with the activating transcription factor 6 alpha (ATF6) which produces adaptive ER stress response factors and protects myocardium from pressure overload. May contribute to spinal presynaptic hypersensitivity and neuropathic pain states after peripheral nerve injury. May play a role in regulating protective astrogenesis from the subventricular zone (SVZ) niche after injury in a NOTCH1-dependent manner. The protein is Thrombospondin-4 (Thbs4) of Rattus norvegicus (Rat).